A 582-amino-acid polypeptide reads, in one-letter code: A-type ATP synthase subunit A 1 (582 aa).

An ATP-binding site is contributed by 231–238 (GPFGSGKT).

The protein belongs to the ATPase alpha/beta chains family. In terms of assembly, has multiple subunits with at least A(3), B(3), C, D, E, F, H, I and proteolipid K(x).

It is found in the cell membrane. It catalyses the reaction ATP + H2O + 4 H(+)(in) = ADP + phosphate + 5 H(+)(out). Its function is as follows. Component of the A-type ATP synthase that produces ATP from ADP in the presence of a proton gradient across the membrane. The A chain is the catalytic subunit. The protein is A-type ATP synthase subunit A 1 of Methanospirillum hungatei JF-1 (strain ATCC 27890 / DSM 864 / NBRC 100397 / JF-1).